A 200-amino-acid chain; its full sequence is Regulator of G-protein signaling 16 (200 aa).

S-palmitoyl cysteine attachment occurs at residues Cys2 and Cys12. One can recognise an RGS domain in the interval 65–181; it reads SFDLLLSSKN…LKSPAYRDLA (117 aa). Residues Tyr168 and Tyr177 each carry the phosphotyrosine modification.

In terms of assembly, interacts with GNAI1 and GNAQ. Interacts with GNAI3, GNAI3 and GNAO1. As to quaternary structure, (Microbial infection) Interacts with porcine circovirus 2 ORF3 protein. In terms of processing, palmitoylated on Cys-2 and/or Cys-12. Post-translationally, phosphorylated. Phosphorylation at Tyr-168 by EGFR enhances GTPase accelerating (GAP) activity toward GNAI1.

The protein localises to the membrane. Regulates G protein-coupled receptor signaling cascades. Inhibits signal transduction by increasing the GTPase activity of G protein alpha subunits, thereby driving them into their inactive GDP-bound form. Plays an important role in the phototransduction cascade by regulating the lifetime and effective concentration of activated transducin alpha. May regulate extra and intracellular mitogenic signals. Functionally, (Microbial infection) Gets inactivated and/or degraded by porcine circovirus 2 ORF3 protein, leading to enhanced expression of IL-6 and IL-8 in infected lymphocytes. This would explain chronic inflammatory response of PCV2 infected pigs. This chain is Regulator of G-protein signaling 16 (RGS16), found in Sus scrofa (Pig).